Consider the following 321-residue polypeptide: Lipoyl synthase (321 aa).

Positions 68, 73, 79, 94, 98, 101, and 308 each coordinate [4Fe-4S] cluster. Residues 80–297 (FNHGTATFMI…KAEALAMGFT (218 aa)) form the Radical SAM core domain.

The protein belongs to the radical SAM superfamily. Lipoyl synthase family. Requires [4Fe-4S] cluster as cofactor.

The protein localises to the cytoplasm. The catalysed reaction is [[Fe-S] cluster scaffold protein carrying a second [4Fe-4S](2+) cluster] + N(6)-octanoyl-L-lysyl-[protein] + 2 oxidized [2Fe-2S]-[ferredoxin] + 2 S-adenosyl-L-methionine + 4 H(+) = [[Fe-S] cluster scaffold protein] + N(6)-[(R)-dihydrolipoyl]-L-lysyl-[protein] + 4 Fe(3+) + 2 hydrogen sulfide + 2 5'-deoxyadenosine + 2 L-methionine + 2 reduced [2Fe-2S]-[ferredoxin]. It participates in protein modification; protein lipoylation via endogenous pathway; protein N(6)-(lipoyl)lysine from octanoyl-[acyl-carrier-protein]: step 2/2. Catalyzes the radical-mediated insertion of two sulfur atoms into the C-6 and C-8 positions of the octanoyl moiety bound to the lipoyl domains of lipoate-dependent enzymes, thereby converting the octanoylated domains into lipoylated derivatives. In Edwardsiella ictaluri (strain 93-146), this protein is Lipoyl synthase.